We begin with the raw amino-acid sequence, 125 residues long: Profilin-P (125 aa).

Ser-2 bears the N-acetylserine mark.

This sequence belongs to the profilin family. As to quaternary structure, occurs in many kinds of cells as a complex with monomeric actin in a 1:1 ratio.

Its subcellular location is the cytoplasm. It localises to the cytoskeleton. Its function is as follows. Binds to actin and affects the structure of the cytoskeleton. At high concentrations, profilin prevents the polymerization of actin, whereas it enhances it at low concentrations. By binding to PIP2, it inhibits the formation of IP3 and DG. This Physarum polycephalum (Slime mold) protein is Profilin-P (PROP).